Reading from the N-terminus, the 93-residue chain is Small ribosomal subunit protein uS19 (93 aa).

The protein belongs to the universal ribosomal protein uS19 family.

In terms of biological role, protein S19 forms a complex with S13 that binds strongly to the 16S ribosomal RNA. This is Small ribosomal subunit protein uS19 from Saccharopolyspora erythraea (strain ATCC 11635 / DSM 40517 / JCM 4748 / NBRC 13426 / NCIMB 8594 / NRRL 2338).